A 356-amino-acid chain; its full sequence is Histidinol-phosphate aminotransferase 1 (356 aa).

Lys-213 carries the N6-(pyridoxal phosphate)lysine modification.

This sequence belongs to the class-II pyridoxal-phosphate-dependent aminotransferase family. Histidinol-phosphate aminotransferase subfamily. In terms of assembly, homodimer. The cofactor is pyridoxal 5'-phosphate.

The catalysed reaction is L-histidinol phosphate + 2-oxoglutarate = 3-(imidazol-4-yl)-2-oxopropyl phosphate + L-glutamate. It participates in amino-acid biosynthesis; L-histidine biosynthesis; L-histidine from 5-phospho-alpha-D-ribose 1-diphosphate: step 7/9. This Burkholderia pseudomallei (strain K96243) protein is Histidinol-phosphate aminotransferase 1.